Reading from the N-terminus, the 1074-residue chain is Calcium-transporting ATPase 8, plasma membrane-type (1074 aa).

The tract at residues 1 to 33 is disordered; the sequence is MTSLLKSSPGRRRGGDVESGKSEHADSDSDTFY. The Cytoplasmic portion of the chain corresponds to 1–180; that stretch reads MTSLLKSSPG…NTYPRKKGKG (180 aa). Over residues 13–27 the composition is skewed to basic and acidic residues; that stretch reads RGGDVESGKSEHADS. The tract at residues 43–54 is interaction with calmodulin; it reads RLQQWRKAALVL. A helical transmembrane segment spans residues 181 to 201; sequence FLRFLWDACHDLTLIILMVAA. Topologically, residues 202-219 are extracellular; sequence VASLALGIKTEGIKEGWY. The chain crosses the membrane as a helical span at residues 220 to 240; that stretch reads DGGSIAFAVILVIVVTAVSDY. Over 241–369 the chain is Cytoplasmic; that stretch reads KQSLQFQNLN…GEETPLQVRL (129 aa). Residues 370–389 form a helical membrane-spanning segment; sequence NGVATFIGSIGLAVAAAVLV. Over 390–426 the chain is Extracellular; that stretch reads ILLTRYFTGHTKDNNGGPQFVKGKTKVGHVIDDVVKV. Residues 427-444 form a helical membrane-spanning segment; that stretch reads LTVAVTIVVVAVPEGLPL. Over 445-840 the chain is Cytoplasmic; it reads AVTLTLAYSM…RWGRSVYANI (396 aa). The active-site 4-aspartylphosphate intermediate is D482. Residues D785 and D789 each coordinate Mg(2+). The helical transmembrane segment at 841 to 859 threads the bilayer; sequence QKFIQFQLTVNVAALVINV. Over 860 to 870 the chain is Extracellular; the sequence is VAAISSGDVPL. A helical membrane pass occupies residues 871–891; that stretch reads TAVQLLWVNLIMDTLGALALA. The Cytoplasmic segment spans residues 892–911; it reads TEPPTDHLMGRPPVGRKEPL. Residues 912–934 traverse the membrane as a helical segment; sequence ITNIMWRNLLIQAIYQVSVLLTL. The Extracellular segment spans residues 935–949; sequence NFRGISILGLEHEVH. Residues 950–971 form a helical membrane-spanning segment; that stretch reads EHATRVKNTIIFNAFVLCQAFN. At 972 to 989 the chain is on the cytoplasmic side; it reads EFNARKPDEKNIFKGVIK. Residues 990 to 1011 traverse the membrane as a helical segment; the sequence is NRLFMGIIVITLVLQVIIVEFL. The Extracellular portion of the chain corresponds to 1012 to 1021; the sequence is GKFASTTKLN. The helical transmembrane segment at 1022-1043 threads the bilayer; that stretch reads WKQWLICVGIGVISWPLALVGK. Topologically, residues 1044 to 1074 are cytoplasmic; sequence FIPVPAAPISNKLKVLKFWGKKKNSSGEGSL.

It belongs to the cation transport ATPase (P-type) (TC 3.A.3) family. Type IIB subfamily.

The protein resides in the cell membrane. The enzyme catalyses Ca(2+)(in) + ATP + H2O = Ca(2+)(out) + ADP + phosphate + H(+). Activated by calmodulin. In terms of biological role, this magnesium-dependent enzyme catalyzes the hydrolysis of ATP coupled with the translocation of calcium from the cytosol out of the cell. The polypeptide is Calcium-transporting ATPase 8, plasma membrane-type (ACA8) (Arabidopsis thaliana (Mouse-ear cress)).